The primary structure comprises 760 residues: Catecholate siderophore receptor Fiu (760 aa).

Residues 1-31 form the signal peptide; sequence MENNRNFPARQFHSLTFFAGLCIGITPVAQA. The TBDR plug domain maps to 67 to 175; sequence PVADTTRTMT…PTGSINMISK (109 aa). Residues 180–760 form the TBDR beta-barrel domain; that stretch reads DSGIDASASI…TFLLTANMHF (581 aa). The TonB C-terminal box signature appears at 743–760; it reads RYHPGEPRTFLLTANMHF.

Belongs to the TonB-dependent receptor family.

It localises to the cell outer membrane. Its function is as follows. Involved in the active transport across the outer membrane of iron complexed with catecholate siderophores such as dihydroxybenzoylserine and dihydroxybenzoate. It derives its energy for transport by interacting with the trans-periplasmic membrane protein TonB. Can also transport catechol-substituted cephalosporins. Receptor for microcins M, H47 and E492. This chain is Catecholate siderophore receptor Fiu (fiu), found in Escherichia coli O157:H7.